Reading from the N-terminus, the 544-residue chain is Neurofilament light polypeptide (544 aa).

Ser-2 is subject to N-acetylserine. A head region spans residues 2–87 (SSYSYDPYYT…KIVRTQEKVQ (86 aa)). In terms of domain architecture, IF rod spans 84–394 (EKVQLQDLND…KLLEGEETRL (311 aa)). The tract at residues 88–119 (LQDLNDRFANFIERVHELEQRNKVLEAELLLL) is coil 1A. The tract at residues 120–132 (RQKHNEPSRLRDM) is linker 1. Residues 133–228 (YEKEVRDVRL…KVHEEELSQL (96 aa)) are coil 1B. Residues 229 to 246 (QSQVQYAQVSLEVEVAKP) are linker 12. The interval 247 to 265 (DLSSALRDIRGQYEKLAAK) is coil 2A. The linker 2 stretch occupies residues 266–274 (NMQSAEEWF). The tract at residues 275-390 (KSRFTVLTQS…AAYRKLLEGE (116 aa)) is coil 2B. The tract at residues 391 to 435 (ETRLSFSGVGAITSGYTQSAPVFGRSAYSLQSSSYMTSRAFPTYY) is tail, subdomain A. The segment at 391–544 (ETRLSFSGVG…EESEKKEKKK (154 aa)) is tail. Residues 436–544 (SSHVQEEQLD…EESEKKEKKK (109 aa)) form a tail, subdomain B (acidic) region. Residues 450–544 (IESSRAEEAK…EESEKKEKKK (95 aa)) are disordered. Residues 451-462 (ESSRAEEAKAEA) show a composition bias toward basic and acidic residues. Over residues 463–525 (PEEEEEEAAE…EAEGDGEEEG (63 aa)) the composition is skewed to acidic residues. Residues 526 to 544 (ESKGDEAAEEESEKKEKKK) are compositionally biased toward basic and acidic residues.

It belongs to the intermediate filament family. In terms of assembly, forms homodimers (in vitro).

The protein localises to the cell projection. It localises to the axon. Its subcellular location is the cytoplasm. It is found in the cytoskeleton. Its function is as follows. Neurofilaments usually contain three intermediate filament proteins: NEFL, NEFM, and NEFH which are involved in the maintenance of neuronal caliber. May additionally cooperate with other neuronal intermediate filament proteins to form neuronal filamentous networks. The protein is Neurofilament light polypeptide (nefl) of Xenopus laevis (African clawed frog).